We begin with the raw amino-acid sequence, 790 residues long: Tumor necrosis factor alpha-induced protein 3 (790 aa).

An N-acetylalanine modification is found at Ala2. A TRAF-binding region spans residues 58–300; sequence PQFREIIHKA…LTDPENEMKE (243 aa). The OTU domain maps to 92–263; that stretch reads LVALKTNGDG…SHHFVPLVTL (172 aa). The active site involves Asp100. The Nucleophile role is filled by Cys103. 3 interaction with ubiquitin regions span residues 157-159, 190-192, and 224-227; these read LCY, SLE, and FAPL. The active-site Proton acceptor is His256. Residues 369 to 775 are interaction with TNIP1; the sequence is AQNPMESSLP…ACDHFGNAKC (407 aa). An A20-type 1 zinc finger spans residues 381–416; the sequence is SLMDVKCETPNCPFFMSVNTQPLCHECSERRQKNQN. An interaction with RIPK1 region spans residues 386–453; it reads KCETPNCPFF…EPLAWNPEEP (68 aa). Residues Cys387, Cys392, Cys404, and Cys407 each contribute to the Zn(2+) site. The tract at residues 415 to 467 is disordered; sequence QNKLPKLNSKPGPEGLPGMALGASRGEAYEPLAWNPEEPTGGPHSAPPTAPSP. Ser459 is modified (phosphoserine). A20-type zinc fingers lie at residues 472 to 507 and 515 to 548; these read ETTA…LHAS and HLDP…AEAS. Zn(2+)-binding residues include Cys478, Cys483, Cys495, Cys498, Cys521, Cys524, Cys536, and Cys539. The segment at 550–580 is disordered; the sequence is SLSTSLPPSCHQRSKSDPSQLVRSPSPHSCH. Over residues 566–576 the composition is skewed to polar residues; it reads DPSQLVRSPSP. Ser575 is modified (phosphoserine). The A20-type 4 zinc finger occupies 601–636; sequence RTGTSKCRKAGCMYFGTPENKGFCTLCFIEYRENKH. Residues 605 to 655 form a required for proteasomal degradation of UBE2N and UBE2D3, TRAF6 deubiquitination, and TAX1BP1 interaction with UBE2N region; it reads SKCRKAGCMYFGTPENKGFCTLCFIEYRENKHLVAASGKASPTASRFQNTI. Residues 606–790 form a sufficient for inhibitory activity of TNF-induced NF-kappa-B activity region; it reads KCRKAGCMYF…ECFQFKQMYG (185 aa). 4 residues coordinate Zn(2+): Cys607, Cys612, Cys624, and Cys627. Phosphoserine is present on Ser645. The A20-type 5 zinc-finger motif lies at 651-686; that stretch reads FQNTIPCLGRECGTLGSTMFEGYCQKCFIEAQNQRF. Residues Cys657, Cys662, Cys674, and Cys677 each contribute to the Zn(2+) site. The segment covering 689–705 has biased composition (basic and acidic residues); the sequence is AKRTEEQLRSSQRRDVP. Residues 689-712 are disordered; it reads AKRTEEQLRSSQRRDVPRTTQSTS. Residues 697 to 790 are required for lysosomal localization and for TRAF2 lysosomal degradation; sequence RSSQRRDVPR…ECFQFKQMYG (94 aa). 2 consecutive A20-type zinc fingers follow at residues 710–745 and 756–790; these read STSR…RMGP and DPPK…QMYG. Zn(2+)-binding residues include Cys716, Cys721, Cys733, Cys736, Cys762, Cys767, Cys779, and Cys782.

Belongs to the peptidase C64 family. Homodimer. Interacts with TNIP1, TAX1BP1 and TRAF2. Interacts with RNF11, ITCH and TAX1BP1 only after TNF stimulation; these interaction are transient and they are lost after 1 hour of stimulation with TNF. Interacts with YWHAZ and YWHAH. Interacts with IKBKG; the interaction is induced by TNF stimulation and by polyubiquitin. Interacts with RIPK1. Interacts with UBE2N; the interaction requires TAX1BP1. Interacts with TRAF6. In terms of processing, proteolytically cleaved by MALT1 upon TCR stimulation; disrupts NF-kappa-B inhibitory function and results in increased IL-2 production. It is proposed that only a fraction of TNFAIP3 colocalized with TCR and CBM complex is cleaved, leaving the main TNFAIP3 pool intact.

The protein resides in the cytoplasm. Its subcellular location is the nucleus. It localises to the lysosome. The enzyme catalyses Thiol-dependent hydrolysis of ester, thioester, amide, peptide and isopeptide bonds formed by the C-terminal Gly of ubiquitin (a 76-residue protein attached to proteins as an intracellular targeting signal).. Functionally, ubiquitin-editing enzyme that contains both ubiquitin ligase and deubiquitinase activities. Involved in immune and inflammatory responses signaled by cytokines, such as TNF-alpha and IL-1 beta, or pathogens via Toll-like receptors (TLRs) through terminating NF-kappa-B activity. Essential component of a ubiquitin-editing protein complex, comprising also RNF11, ITCH and TAX1BP1, that ensures the transient nature of inflammatory signaling pathways. In cooperation with TAX1BP1 promotes disassembly of E2-E3 ubiquitin protein ligase complexes in IL-1R and TNFR-1 pathways; affected are at least E3 ligases TRAF6, TRAF2 and BIRC2, and E2 ubiquitin-conjugating enzymes UBE2N and UBE2D3. In cooperation with TAX1BP1 promotes ubiquitination of UBE2N and proteasomal degradation of UBE2N and UBE2D3. Upon TNF stimulation, deubiquitinates 'Lys-63'-polyubiquitin chains on RIPK1 and catalyzes the formation of 'Lys-48'-polyubiquitin chains. This leads to RIPK1 proteasomal degradation and consequently termination of the TNF- or LPS-mediated activation of NF-kappa-B. Deubiquitinates TRAF6 probably acting on 'Lys-63'-linked polyubiquitin. Upon T-cell receptor (TCR)-mediated T-cell activation, deubiquitinates 'Lys-63'-polyubiquitin chains on MALT1 thereby mediating disassociation of the CBM (CARD11:BCL10:MALT1) and IKK complexes and preventing sustained IKK activation. Deubiquitinates NEMO/IKBKG; the function is facilitated by TNIP1 and leads to inhibition of NF-kappa-B activation. Upon stimulation by bacterial peptidoglycans, probably deubiquitinates RIPK2. Can also inhibit I-kappa-B-kinase (IKK) through a non-catalytic mechanism which involves polyubiquitin; polyubiquitin promotes association with IKBKG and prevents IKK MAP3K7-mediated phosphorylation. Targets TRAF2 for lysosomal degradation. In vitro able to deubiquitinate 'Lys-11'-, 'Lys-48'- and 'Lys-63' polyubiquitin chains. Inhibitor of programmed cell death. Has a role in the function of the lymphoid system. Required for LPS-induced production of pro-inflammatory cytokines and IFN beta in LPS-tolerized macrophages. The sequence is that of Tumor necrosis factor alpha-induced protein 3 (TNFAIP3) from Macaca fascicularis (Crab-eating macaque).